Consider the following 1015-residue polypeptide: Putative helicase mov-10-B.2 (1015 aa).

Positions 94–130 (QWFRPRRRQQNQANATPGNVSSVTPSSDQGPSCPESG) are disordered. Over residues 109–123 (TPGNVSSVTPSSDQG) the composition is skewed to polar residues. Residue 555–562 (GPPGTGKT) coordinates ATP. The short motif at 677 to 680 (DEAG) is the DEAG box element.

It belongs to the DNA2/NAM7 helicase family. SDE3 subfamily.

The protein resides in the cytoplasm. It is found in the P-body. It catalyses the reaction ATP + H2O = ADP + phosphate + H(+). Functionally, probable RNA helicase. Required for RNA-mediated gene silencing by the RNA-induced silencing complex (RISC). Required for both miRNA-mediated translational repression and miRNA-mediated cleavage of complementary mRNAs by RISC. This Danio rerio (Zebrafish) protein is Putative helicase mov-10-B.2 (mov10b.2).